Reading from the N-terminus, the 266-residue chain is GTP cyclohydrolase MptA (266 aa).

This sequence belongs to the GTP cyclohydrolase IV family. Homodimer. Fe(2+) serves as cofactor.

The catalysed reaction is GTP + H2O = 7,8-dihydroneopterin 2',3'-cyclic phosphate + formate + diphosphate + H(+). Its pathway is cofactor biosynthesis; 5,6,7,8-tetrahydromethanopterin biosynthesis. Converts GTP to 7,8-dihydro-D-neopterin 2',3'-cyclic phosphate, the first intermediate in the biosynthesis of coenzyme methanopterin. The sequence is that of GTP cyclohydrolase MptA from Pyrococcus abyssi (strain GE5 / Orsay).